A 536-amino-acid chain; its full sequence is Caspase recruitment domain-containing protein 9 (536 aa).

Ser-2 carries the phosphoserine modification. The Zn(2+) site is built by Asp-3, Cys-10, and His-73. The region spanning 6-98 (NDDECWSVLE…QLYKKVTGKE (93 aa)) is the CARD domain. Positions 99 to 116 (PARVFSMIIDASGESGLT) are linker. Coiled-coil stretches lie at residues 117 to 277 (QLLM…DRSS) and 332 to 419 (LRKD…QQLE). Lys-125 participates in a covalent cross-link: Glycyl lysine isopeptide (Lys-Gly) (interchain with G-Cter in ubiquitin). Thr-231 carries the phosphothreonine modification. Ser-277 bears the Phosphoserine mark. Residues Ser-424, Ser-425, Ser-431, Ser-450, Ser-460, Ser-483, and Ser-498 each carry the phosphoserine modification. The interval 427-536 (LEDGSPRRSQ…GSDNTDTEGS (110 aa)) is disordered. A compositionally biased stretch (basic and acidic residues) spans 487–502 (PPEKERRRLKESFENY). Positions 503 to 513 (RRKRALRKMQK) are enriched in basic residues. 2 positions are modified to phosphothreonine; by CK2: Thr-531 and Thr-533.

Monomer. Homodimer; homodimerization is mediated by the CARD domain which forms an extensive interaction with the adjacent linker and coiled-coil regions; leads to an autoinhibited state. Homomultimer; polymerizes following activation, forming a nucleating helical template that seeds BCL10-filament formation via a CARD-CARD interaction. Interacts (via CARD domain) with BCL10 (via CARD domain); interaction takes place following CARD9 activation and polymerization, leading to the formation of a filamentous CBM complex assembly. Component of a CBM complex (CARD9-BCL10, MALT1), composed of CARD9, BCL10 and MALT1. Interacts with RASGRF1. Interacts with NOD2 (via NACHT domain); interaction is direct. Interacts with RIPK2. Interacts with VHL; without leading to protein degradation. Phosphorylated at Thr-231 by PRKCD downstream of C-type lectin receptors activation: phosphorylation promotes interaction with BCL10, followed by activation of NF-kappa-B and MAP kinase p38 pathways. Phosphorylated at Thr-531 and Thr-533 by CK2 following interaction with VHL, leading to inhibit the ability to activate NF-kappa-B. In terms of processing, ubiquitinated at Lys-125 via 'Lys-27'-linked ubiquitin by TRIM62 downstream of C-type lectin receptors activation; leading to CARD9 activation, followed by activation of NF-kappa-B and MAP kinase p38 pathways. Deubiquitinated at Lys-125 by USP15, inhibiting CARD9. As to expression, expression is restricted to several populations of phagocytes, such as macrophages, monocytes, and dendritic cells. Highly expressed in spleen. Also detected in liver, placenta, lung, peripheral blood leukocytes and in brain.

Its subcellular location is the cytoplasm. Its activity is regulated as follows. Maintained in an autoinhibited state via homodimerization in which the CARD domain forms an extensive interaction with the adjacent linker and coiled-coil regions. Activation downstream of C-type lectin receptors, by phosphorylation by PRKCD and/or ubiquitination by TRIM62, triggers disruption of the CARD domain-coiled coil interface, CARD9 homooligomerization and BCL10 recruitment, followed by activation of NF-kappa-B and MAP kinase p38 pathways. Zinc-binding inhibits activation by stabilizing the CARD ground-state conformation and restricting its capacity to form BCL10-nucleating filaments. Functionally, adapter protein that plays a key role in innate immune response against fungi by forming signaling complexes downstream of C-type lectin receptors. CARD9-mediated signals are essential for antifungal immunity against a subset of fungi from the phylum Ascomycota. Transduces signals in myeloid cells downstream of C-type lectin receptors CLEC7A (dectin-1), CLEC6A (dectin-2) and CLEC4E (Mincle), which detect pathogen-associated molecular pattern metabolites (PAMPs), such as fungal carbohydrates, and trigger CARD9 activation. Upon activation, CARD9 homooligomerizes to form a nucleating helical template that recruits BCL10 via CARD-CARD interaction, thereby promoting polymerization of BCL10 and subsequent recruitment of MALT1: this leads to activation of NF-kappa-B and MAP kinase p38 (MAPK11, MAPK12, MAPK13 and/or MAPK14) pathways which stimulate expression of genes encoding pro-inflammatory cytokines and chemokines. CARD9 signaling in antigen-presenting cells links innate sensing of fungi to the activation of adaptive immunity and provides a cytokine milieu that induces the development and subsequent of interleukin 17-producing T helper (Th17) cells. Also involved in activation of myeloid cells via classical ITAM-associated receptors and TLR: required for TLR-mediated activation of MAPK, while it is not required for TLR-induced activation of NF-kappa-B. CARD9 can also be engaged independently of BCL10: forms a complex with RASGRF1 downstream of C-type lectin receptors, which recruits and activates HRAS, leading to ERK activation and the production of cytokines. Acts as an important regulator of the intestinal commensal fungi (mycobiota) component of the gut microbiota. Plays an essential role in antifungal immunity against dissemination of gut fungi: acts by promoting induction of antifungal IgG antibodies response in CX3CR1(+) macrophages to confer protection against disseminated C.albicans or C.auris infection. Also mediates immunity against other pathogens, such as certain bacteria, viruses and parasites; CARD9 signaling is however redundant with other innate immune responses. In response to L.monocytogenes infection, required for the production of inflammatory cytokines activated by intracellular peptidoglycan: acts by connecting NOD2 recognition of peptidoglycan to downstream activation of MAP kinases (MAPK) without activating NF-kappa-B. The polypeptide is Caspase recruitment domain-containing protein 9 (Homo sapiens (Human)).